Here is a 222-residue protein sequence, read N- to C-terminus: Probable fructose-6-phosphate aldolase (222 aa).

The active-site Schiff-base intermediate with substrate is K87.

The protein belongs to the transaldolase family. Type 3A subfamily.

Its subcellular location is the cytoplasm. The catalysed reaction is beta-D-fructose 6-phosphate = dihydroxyacetone + D-glyceraldehyde 3-phosphate. In terms of biological role, catalyzes the reversible formation of fructose 6-phosphate from dihydroxyacetone and D-glyceraldehyde 3-phosphate via an aldolization reaction. This Streptococcus pneumoniae (strain ATCC 700669 / Spain 23F-1) protein is Probable fructose-6-phosphate aldolase.